A 380-amino-acid polypeptide reads, in one-letter code: Actin-like protein (380 aa).

This sequence belongs to the actin family. ARP1 subfamily.

The protein localises to the cytoplasm. The protein resides in the cytoskeleton. Its function is as follows. Involved in nuclear migration. May function as a component of the dynactin complex which activates force generation by cytoplasmic dynein. The chain is Actin-like protein (ro-4) from Neurospora crassa (strain ATCC 24698 / 74-OR23-1A / CBS 708.71 / DSM 1257 / FGSC 987).